We begin with the raw amino-acid sequence, 298 residues long: GTP cyclohydrolase FolE2 (298 aa).

It belongs to the GTP cyclohydrolase IV family.

The catalysed reaction is GTP + H2O = 7,8-dihydroneopterin 3'-triphosphate + formate + H(+). It participates in cofactor biosynthesis; 7,8-dihydroneopterin triphosphate biosynthesis; 7,8-dihydroneopterin triphosphate from GTP: step 1/1. Converts GTP to 7,8-dihydroneopterin triphosphate. In Pseudomonas fluorescens (strain SBW25), this protein is GTP cyclohydrolase FolE2.